Here is a 450-residue protein sequence, read N- to C-terminus: Four-jointed box protein 1 (450 aa).

A signal peptide spans 1–28; sequence MGRKMRGAAAAAGLWLLALSSLLTLWGG. 2 disordered regions span residues 36 to 61 and 88 to 111; these read LPAS…PEPR and AGAD…GLSW. Over residues 93–111 the composition is skewed to basic and acidic residues; it reads PPRRHQDDRGRHEPSGLSW. N248 and N277 each carry an N-linked (GlcNAc...) asparagine glycan.

This sequence belongs to the FJX1/FJ family. In terms of processing, glycosylated. Undergoes proteolytic cleavage. As to expression, expressed in brain, kidney and lung. In the telencephalon, expressed in the piriform cortex, hippocampus and olfactory bulb. In the diencephalon, expressed in the dorsal thalamus. Expressed in Purkinje cells of the cerebellum and in numerous medullary nuclei.

It is found in the secreted. Functionally, acts as an inhibitor of dendrite extension and branching. The chain is Four-jointed box protein 1 (Fjx1) from Mus musculus (Mouse).